The sequence spans 435 residues: ATP-dependent protease ATPase subunit HslU (435 aa).

ATP is bound by residues isoleucine 18, 60-65 (GVGKTE), aspartate 248, glutamate 313, and arginine 385.

Belongs to the ClpX chaperone family. HslU subfamily. A double ring-shaped homohexamer of HslV is capped on each side by a ring-shaped HslU homohexamer. The assembly of the HslU/HslV complex is dependent on binding of ATP.

Its subcellular location is the cytoplasm. ATPase subunit of a proteasome-like degradation complex; this subunit has chaperone activity. The binding of ATP and its subsequent hydrolysis by HslU are essential for unfolding of protein substrates subsequently hydrolyzed by HslV. HslU recognizes the N-terminal part of its protein substrates and unfolds these before they are guided to HslV for hydrolysis. This Agrobacterium fabrum (strain C58 / ATCC 33970) (Agrobacterium tumefaciens (strain C58)) protein is ATP-dependent protease ATPase subunit HslU.